We begin with the raw amino-acid sequence, 74 residues long: DNA-directed RNA polymerase subunit omega (74 aa).

The protein belongs to the RNA polymerase subunit omega family. In terms of assembly, the RNAP catalytic core consists of 2 alpha, 1 beta, 1 beta' and 1 omega subunit. When a sigma factor is associated with the core the holoenzyme is formed, which can initiate transcription.

It catalyses the reaction RNA(n) + a ribonucleoside 5'-triphosphate = RNA(n+1) + diphosphate. Its function is as follows. Promotes RNA polymerase assembly. Latches the N- and C-terminal regions of the beta' subunit thereby facilitating its interaction with the beta and alpha subunits. In Marinomonas sp. (strain MWYL1), this protein is DNA-directed RNA polymerase subunit omega.